The sequence spans 132 residues: Fluoride-specific ion channel FluC 2 (132 aa).

4 consecutive transmembrane segments (helical) span residues 8-28, 41-61, 66-86, and 96-116; these read LQLELLELLLVGAGAVPGALL, LLVNVLGAALLGFLSGLPAAP, LLGIGFCGSVTTFSSWMLAAV, and AALGLIGLTLGLGLGAAALGF. The Na(+) site is built by Gly-73 and Thr-76.

It belongs to the fluoride channel Fluc/FEX (TC 1.A.43) family.

The protein resides in the cell inner membrane. The catalysed reaction is fluoride(in) = fluoride(out). With respect to regulation, na(+) is not transported, but it plays an essential structural role and its presence is essential for fluoride channel function. Its function is as follows. Fluoride-specific ion channel. Important for reducing fluoride concentration in the cell, thus reducing its toxicity. This chain is Fluoride-specific ion channel FluC 2, found in Synechococcus sp. (strain CC9605).